Here is an 89-residue protein sequence, read N- to C-terminus: Large ribosomal subunit protein bL31B (89 aa).

This sequence belongs to the bacterial ribosomal protein bL31 family. Type B subfamily. In terms of assembly, part of the 50S ribosomal subunit.

The chain is Large ribosomal subunit protein bL31B from Actinobacillus pleuropneumoniae serotype 5b (strain L20).